A 272-amino-acid polypeptide reads, in one-letter code: Troponin T, fast skeletal muscle (272 aa).

The span at 1-50 (MSDEETEQVEEQYEEEEEAQEEEVQEEAPEPEEVQEDAVAEEEREEDEEE) shows a compositional bias: acidic residues. The tract at residues 1 to 75 (MSDEETEQVE…EKVDFDDIQK (75 aa)) is disordered. S2 bears the N-acetylserine mark. At S2 the chain carries Phosphoserine. Basic and acidic residues predominate over residues 63–75 (PEGEKVDFDDIQK). Position 91 is a phosphoserine (S91). The span at 114-156 (RAERAEQQRIRAEKEREPQNRLAEEKARREEEDAKRRAEDDMK) shows a compositional bias: basic and acidic residues. The interval 114 to 193 (RAERAEQQRI…TAREMKKKIL (80 aa)) is disordered. S162, S169, and S170 each carry phosphoserine. The span at 184–193 (TAREMKKKIL) shows a compositional bias: basic and acidic residues. At S206 the chain carries Phosphoserine. Y222 carries the phosphotyrosine modification. The tract at residues 248–272 (RIDQAQKHSKKAGATAKGKVGGRWK) is disordered.

It belongs to the troponin T family. As to expression, expressed predominantly in skeletal muscle.

Functionally, troponin T is the tropomyosin-binding subunit of troponin, the thin filament regulatory complex which confers calcium-sensitivity to striated muscle actomyosin ATPase activity. The protein is Troponin T, fast skeletal muscle (Tnnt3) of Mus musculus (Mouse).